Reading from the N-terminus, the 856-residue chain is Wall-associated receptor kinase 17 (856 aa).

A signal peptide spans 1–42 (MPSRSPACRPRGRNRRSAADAVARPLALALILVSTLPRAAHS). N-linked (GlcNAc...) asparagine glycans are attached at residues N171 and N234. Residues 297–334 (FEKLCKYGTCVDAPTGAGYLCKCPSGYDGNPYVSDGCQ) form the EGF-like 1 domain. Disulfide bonds link C301/C306, C319/C333, C339/C353, C347/C362, and C364/C379. Positions 335-380 (DINECRNYNSNNCTYQNLCNNTLGGYTCSCPENNIGDGYRTGTGCN) constitute an EGF-like 2; calcium-binding domain. 2 N-linked (GlcNAc...) asparagine glycosylation sites follow: N346 and N354. N-linked (GlcNAc...) asparagine glycosylation is present at N380. Residues 452-470 (VLGVSLVLMVTTTTAASCY) traverse the membrane as a helical segment. Residues 527–805 (YSESRILGRG…VLQELRRSFT (279 aa)) enclose the Protein kinase domain. ATP-binding positions include 533–541 (LGRGGQGTV) and K555. The Proton acceptor role is filled by D652. Residues 816–844 (SIQENSEQEEKHLHESRSIPSLQSSEVST) form a disordered region. Residues 823–832 (QEEKHLHESR) show a composition bias toward basic and acidic residues. Residues 833 to 844 (SIPSLQSSEVST) show a composition bias toward polar residues.

Belongs to the protein kinase superfamily. Ser/Thr protein kinase family. In terms of assembly, interacts with WAK17 isoform 2; the interaction is direct. Interacts with LRR5; the interaction is direct. As to quaternary structure, interacts with WAK17 isoform 1; the interaction is direct. (Microbial infection) Interacts with G.zeae CFEM1 (via CFEM domain); the interaction is direct. Interacts with G.zeae CFEMN1; the interaction is direct. Interacts with G.zeae CFEM5; the interaction is direct. Mn(2+) serves as cofactor. It depends on Mg(2+) as a cofactor.

The protein localises to the cell membrane. The catalysed reaction is L-seryl-[protein] + ATP = O-phospho-L-seryl-[protein] + ADP + H(+). It catalyses the reaction L-threonyl-[protein] + ATP = O-phospho-L-threonyl-[protein] + ADP + H(+). Kinase that contributes to activation of the hypersensitive response, a form of programmed cell death, upon fungal infection. In terms of biological role, secreted protein that contributes to activation of the hypersensitive response, a form of programmed cell death, upon fungal infection. May sense the presence of fungal material and relay the signal to WAK17 isoform 1. The protein is Wall-associated receptor kinase 17 of Zea mays (Maize).